Reading from the N-terminus, the 659-residue chain is Cytochrome bo(3) ubiquinol oxidase subunit 1 (659 aa).

Residues 1-14 (MFGKLSLNSIPYHD) are Extracellular-facing. The chain crosses the membrane as a helical span at residues 15 to 35 (PIIMITCCVVILVFLVISIII). The Cytoplasmic segment spans residues 36 to 56 (TIAQKWQYLWNEWCCTVDHKK). Residues 57 to 77 (IAKMYIFLAFIMLFRGFADAI) traverse the membrane as a helical segment. 3 residues coordinate a ubiquinone: Arg71, Asp75, and His101. Over 78–109 (MMRMQQFLVSSYHGNGTGFLPPHHYDQIFTAH) the chain is Extracellular. A heme b-binding site is contributed by His109. Residues 110-130 (GVIMIFFVAMPLVIGLMNFVV) traverse the membrane as a helical segment. Topologically, residues 131 to 148 (PLQIGSRDVAFPFLNNLS) are cytoplasmic. The chain crosses the membrane as a helical span at residues 149–169 (LWLTIFSALLMNVSLGIGEFA). At 170-192 (QTGWLAYPPLSELQYSPGVGVDY) the chain is on the extracellular side. Trp173 contacts heme b. A helical transmembrane segment spans residues 193–213 (WIWSLQISGIGTTLTAINFLV). At 214-235 (TIIKMRSSGMNWFKIPVFTWTS) the chain is on the cytoplasmic side. The chain crosses the membrane as a helical span at residues 236–256 (FCTNILIIASFPVLTVSLLLL). Residues 257-280 (TLDRYLGFHFFTNDFGGNMMMYVN) are Extracellular-facing. Residues 281–301 (LIWIWGHPEVYILILPVFGIF) form a helical membrane-spanning segment. A Cu(2+)-binding site is contributed by His287. The segment at residues 287-291 (HPEVY) is a cross-link (1'-histidyl-3'-tyrosine (His-Tyr)). A Fe(II)-heme o-binding site is contributed by Tyr291. Over 302–318 (SEVVATFSSKELFGYTS) the chain is Cytoplasmic. The chain crosses the membrane as a helical span at residues 319–339 (LIWATIVITILSFIVWLHHFF). Residues His336 and His337 each contribute to the Cu(2+) site. Over 340 to 350 (TMGASANVNAF) the chain is Extracellular. Residues 351–371 (FGITTMIISIPTGVKIFNWLF) form a helical membrane-spanning segment. Residues 372–382 (TMYRGNVRINS) are Cytoplasmic-facing. Residues 383-403 (IMLWTIGFLITFSIGGMAGVL) form a helical membrane-spanning segment. Topologically, residues 404–416 (LSLPVIDFSLHNS) are extracellular. Fe(II)-heme o-binding residues include His414 and His422. Residues 417-437 (LFLVAHFHNVIIGGVVFGCFA) form a helical membrane-spanning segment. His424 serves as a coordination point for heme b. Residues 438–459 (GITYWFPKLFGFMLSEKWGKRA) lie on the Cytoplasmic side of the membrane. A helical membrane pass occupies residues 460-480 (FWCWFFGFFCAFMPLYALGLM). At 481–499 (GMTRRLSQNINPQFHSMLT) the chain is on the extracellular side. Heme b contacts are provided by Arg484 and Arg485. The helical transmembrane segment at 500 to 520 (IAALGTILIFIGIVFQIIQIF) threads the bilayer. Over 521–587 (VSIRDRNLNR…KLPILYTSFH (67 aa)) the chain is Cytoplasmic. Residues 588–608 (MPKNTKFGFLIGFFAFLLGFS) traverse the membrane as a helical segment. Residue Ala609 is a topological domain, extracellular. A helical membrane pass occupies residues 610–630 (VWYIFWLFFISFFVIIYLLVI). At 631 to 659 (KSLDTNCDYIISIEEIKEIEKCINIKKMD) the chain is on the cytoplasmic side.

Belongs to the heme-copper respiratory oxidase family. As to quaternary structure, the cytochrome bo(3) ubiquinol oxidase complex is a heterooctamer of two A chains, two B chains, two C chains and two D chains. Cu(2+) is required as a cofactor. Heme b serves as cofactor. It depends on Fe(II)-heme o as a cofactor.

It localises to the cell membrane. It catalyses the reaction 2 a ubiquinol + O2 + n H(+)(in) = 2 a ubiquinone + 2 H2O + n H(+)(out). In terms of biological role, cytochrome bo(3) ubiquinol oxidase is the terminal enzyme in the aerobic respiratory chain. Catalyzes the four-electron reduction of O2 to water, using a ubiquinol as a membrane soluble electron donor for molecular oxygen reduction. Has proton pump activity across the membrane in addition to electron transfer, pumping 2 protons/electron and generating a proton motive force. All the redox centers of this enzyme complex are located within the largest subunit, subunit I. Protons are probably pumped via D- and K- channels found in this subunit. The chain is Cytochrome bo(3) ubiquinol oxidase subunit 1 (cyoB) from Buchnera aphidicola subsp. Baizongia pistaciae (strain Bp).